The primary structure comprises 257 residues: Type III pantothenate kinase (257 aa).

ATP is bound at residue 7–14; the sequence is DIGNSHTV. 106-109 contributes to the substrate binding site; sequence GTDR. Residue aspartate 108 is the Proton acceptor of the active site. Position 128 (aspartate 128) interacts with K(+). Threonine 132 contacts ATP. Threonine 184 lines the substrate pocket.

This sequence belongs to the type III pantothenate kinase family. Homodimer. NH4(+) serves as cofactor. K(+) is required as a cofactor.

The protein localises to the cytoplasm. It catalyses the reaction (R)-pantothenate + ATP = (R)-4'-phosphopantothenate + ADP + H(+). It functions in the pathway cofactor biosynthesis; coenzyme A biosynthesis; CoA from (R)-pantothenate: step 1/5. Its function is as follows. Catalyzes the phosphorylation of pantothenate (Pan), the first step in CoA biosynthesis. This is Type III pantothenate kinase from Nocardioides sp. (strain ATCC BAA-499 / JS614).